The primary structure comprises 275 residues: 3-methyl-2-oxobutanoate hydroxymethyltransferase (275 aa).

Positions 49 and 88 each coordinate Mg(2+). 3-methyl-2-oxobutanoate is bound by residues 49 to 50 (DS), aspartate 88, and lysine 118. Residue glutamate 120 coordinates Mg(2+). The Proton acceptor role is filled by glutamate 187.

This sequence belongs to the PanB family. Homodecamer; pentamer of dimers. The cofactor is Mg(2+).

It localises to the cytoplasm. The catalysed reaction is 3-methyl-2-oxobutanoate + (6R)-5,10-methylene-5,6,7,8-tetrahydrofolate + H2O = 2-dehydropantoate + (6S)-5,6,7,8-tetrahydrofolate. The protein operates within cofactor biosynthesis; (R)-pantothenate biosynthesis; (R)-pantoate from 3-methyl-2-oxobutanoate: step 1/2. In terms of biological role, catalyzes the reversible reaction in which hydroxymethyl group from 5,10-methylenetetrahydrofolate is transferred onto alpha-ketoisovalerate to form ketopantoate. The sequence is that of 3-methyl-2-oxobutanoate hydroxymethyltransferase from Hyphomonas neptunium (strain ATCC 15444).